Reading from the N-terminus, the 261-residue chain is 22 kDa alpha-zein 8b (261 aa).

Positions 1 to 16 are cleaved as a signal peptide; sequence LALLALLALFVSATNA.

Belongs to the zein family.

Zeins are major seed storage proteins. This chain is 22 kDa alpha-zein 8b, found in Zea mays (Maize).